The sequence spans 528 residues: Gamma-taxilin (528 aa).

A compositionally biased stretch (basic and acidic residues) spans 1-10; the sequence is MATRVEEAAR. Residues 1–36 are disordered; the sequence is MATRVEEAARGRGGGAEEATEAGRGGRRRSPRQKFE. Residues R12 and R24 each carry the omega-N-methylarginine modification. Phosphoserine is present on residues S79, S86, S97, and S105. The segment at 102 to 130 is disordered; that stretch reads TQESREEIPGGEARTDPPDGQQDSECNRN. Residues 104–118 are compositionally biased toward basic and acidic residues; the sequence is ESREEIPGGEARTDP. The stretch at 153–464 forms a coiled coil; that stretch reads EEKLAALCKK…LKEQVSIKAA (312 aa). Y283 bears the Phosphotyrosine mark. Residues 486–528 form a disordered region; sequence HKELNTSSKRALGAHLEAEPKSQRSAVQKPPSTGSAPAIESVD. Residues 508 to 520 show a composition bias toward polar residues; that stretch reads QRSAVQKPPSTGS. Phosphoserine is present on S517.

This sequence belongs to the taxilin family. As to quaternary structure, binds to the C-terminal coiled coil region of syntaxin family members STX1A, STX3A and STX4A. Forms a heterodimer with ATF4 in osteoblasts. Ubiquitously expressed. Expressed at high level in heart and skeletal muscle. Expressed in brain, placenta, lung, liver, kidney and pancreas.

It localises to the nucleus membrane. It is found in the cytoplasm. The protein resides in the cytosol. May be involved in intracellular vesicle traffic. Inhibits ATF4-mediated transcription, possibly by dimerizing with ATF4 to form inactive dimers that cannot bind DNA. May be involved in regulating bone mass density through an ATF4-dependent pathway. May be involved in cell cycle progression. This is Gamma-taxilin (TXLNG) from Homo sapiens (Human).